We begin with the raw amino-acid sequence, 344 residues long: N-acetyl-gamma-glutamyl-phosphate reductase (344 aa).

Residue C150 is part of the active site.

The protein belongs to the NAGSA dehydrogenase family. Type 1 subfamily.

It is found in the cytoplasm. The catalysed reaction is N-acetyl-L-glutamate 5-semialdehyde + phosphate + NADP(+) = N-acetyl-L-glutamyl 5-phosphate + NADPH + H(+). Its pathway is amino-acid biosynthesis; L-arginine biosynthesis; N(2)-acetyl-L-ornithine from L-glutamate: step 3/4. Catalyzes the NADPH-dependent reduction of N-acetyl-5-glutamyl phosphate to yield N-acetyl-L-glutamate 5-semialdehyde. This is N-acetyl-gamma-glutamyl-phosphate reductase from Pseudomonas aeruginosa (strain UCBPP-PA14).